Here is a 1038-residue protein sequence, read N- to C-terminus: Rap guanine nucleotide exchange factor 1 (1038 aa).

A nucleoside 3',5'-cyclic phosphate is bound at residue 10–140 (RLSPLHTFSD…DILTDETPSD (131 aa)). A DEP domain is found at 234-316 (TDNHQVIRDI…KTNSYYRWVQ (83 aa)). 375-492 (ALSHLSTMVK…VRLKDYGEDV (118 aa)) is a binding site for a nucleoside 3',5'-cyclic phosphate. In terms of domain architecture, N-terminal Ras-GEF spans 516-654 (CGYSVMAGKA…DILTRIGSIR (139 aa)). Positions 795–1028 (DSQELAHQLF…MQLSYEIEPK (234 aa)) constitute a Ras-GEF domain.

As to quaternary structure, interacts (via C-terminus) with drn-1. As to expression, expressed specifically in neurons including the nerve ring, ventral and dorsal nerve cord motor neurons and tail ganglia.

In terms of biological role, guanine nucleotide-releasing protein. Together with GTPase drn-1, may regulate acetylcholine release at the neuromuscular junctions probably downstream of G-protein gsa-1 and adenylate cyclase acy-1. The chain is Rap guanine nucleotide exchange factor 1 (epac-1) from Caenorhabditis elegans.